The sequence spans 97 residues: Co-chaperonin GroES (97 aa).

Belongs to the GroES chaperonin family. In terms of assembly, heptamer of 7 subunits arranged in a ring. Interacts with the chaperonin GroEL.

The protein localises to the cytoplasm. Together with the chaperonin GroEL, plays an essential role in assisting protein folding. The GroEL-GroES system forms a nano-cage that allows encapsulation of the non-native substrate proteins and provides a physical environment optimized to promote and accelerate protein folding. GroES binds to the apical surface of the GroEL ring, thereby capping the opening of the GroEL channel. The protein is Co-chaperonin GroES of Azotobacter vinelandii (strain DJ / ATCC BAA-1303).